Here is a 365-residue protein sequence, read N- to C-terminus: 3-dehydroquinate synthase (365 aa).

NAD(+) contacts are provided by residues 69–74 (DGEAHK), 103–107 (GVIGD), 127–128 (TT), K140, K149, and 167–170 (TLNT). Residues E182, H245, and H262 each coordinate Zn(2+).

It belongs to the sugar phosphate cyclases superfamily. Dehydroquinate synthase family. Co(2+) is required as a cofactor. The cofactor is Zn(2+). It depends on NAD(+) as a cofactor.

The protein resides in the cytoplasm. The catalysed reaction is 7-phospho-2-dehydro-3-deoxy-D-arabino-heptonate = 3-dehydroquinate + phosphate. It participates in metabolic intermediate biosynthesis; chorismate biosynthesis; chorismate from D-erythrose 4-phosphate and phosphoenolpyruvate: step 2/7. Catalyzes the conversion of 3-deoxy-D-arabino-heptulosonate 7-phosphate (DAHP) to dehydroquinate (DHQ). This chain is 3-dehydroquinate synthase, found in Pseudomonas putida (strain W619).